The following is a 523-amino-acid chain: UDP-glucuronosyltransferase 3A1 (523 aa).

Residues 1 to 22 (MAAHRSWLLVSFFLLEVLLLEA) form the signal peptide. Residues 23–487 (AKILTISTLS…QPWHEQYMLD (465 aa)) lie on the Extracellular side of the membrane. Asparagine 70 carries N-linked (GlcNAc...) asparagine glycosylation. A helical membrane pass occupies residues 488-508 (VFLFLLGLTLGTLWLSVKVLV). Residues 509-523 (AVTRYLSISRKVKQA) lie on the Cytoplasmic side of the membrane.

This sequence belongs to the UDP-glycosyltransferase family. As to expression, highly expressed in kidney, while it is expressed at low levels in liver. Not detected in other tissues examined.

It localises to the membrane. It carries out the reaction glucuronate acceptor + UDP-alpha-D-glucuronate = acceptor beta-D-glucuronoside + UDP + H(+). In terms of biological role, UDP-glucuronosyltransferases catalyze phase II biotransformation reactions in which lipophilic substrates are conjugated with glucuronic acid to increase water solubility and enhance excretion. They are of major importance in the conjugation and subsequent elimination of potentially toxic xenobiotics and endogenous compounds. The sequence is that of UDP-glucuronosyltransferase 3A1 (Ugt3a1) from Mus musculus (Mouse).